The following is a 281-amino-acid chain: Glycerol uptake facilitator protein (281 aa).

Over 1–5 the chain is Cytoplasmic; that stretch reads MSQTS. A helical membrane pass occupies residues 6 to 34; the sequence is TLKGQCIAEFLGTGLLIFFGVGCVAALKV. At 35-39 the chain is on the periplasmic side; the sequence is AGASF. Residues 40 to 60 traverse the membrane as a helical segment; it reads GQWEISVIWGLGVAMAIYLTA. The Cytoplasmic portion of the chain corresponds to 61 to 63; the sequence is GVS. An intramembrane segment occupies 64-67; sequence GAHL. An NPA 1 motif is present at residues 68–70; it reads NPA. An intramembrane region (helical) is located at residues 68–78; that stretch reads NPAVTIALWLF. Over 79–84 the chain is Cytoplasmic; the sequence is ACFDKR. A helical transmembrane segment spans residues 85-108; it reads KVIPFIVSQVAGAFCAAALVYGLY. The Periplasmic portion of the chain corresponds to 109-143; it reads YNLFFDFEQTHHIVRGSVESVDLAGTFSTYPNPHI. Residues 144–169 traverse the membrane as a helical segment; that stretch reads NFVQAFAVEMVITAILMGLILALTDD. Residues 170 to 177 lie on the Cytoplasmic side of the membrane; sequence GNGVPRGP. A helical transmembrane segment spans residues 178–194; the sequence is LAPLLIGLLIAVIGASM. At 195 to 198 the chain is on the periplasmic side; the sequence is GPLT. Residues 199 to 202 lie within the membrane without spanning it; the sequence is GFAM. Positions 203-205 match the NPA 2 motif; it reads NPA. Positions 203–216 form an intramembrane region, helical; the sequence is NPARDFGPKVFAWL. The Periplasmic segment spans residues 217 to 231; that stretch reads AGWGNVAFTGGRDIP. Residues 232 to 254 form a helical membrane-spanning segment; it reads YFLVPLFGPIVGAIVGAFAYRKL. Over 255–281 the chain is Cytoplasmic; it reads IGRHLPCDICVVEEKETTTPSEQKASL.

It belongs to the MIP/aquaporin (TC 1.A.8) family. As to quaternary structure, homotetramer.

It localises to the cell inner membrane. It carries out the reaction glycerol(in) = glycerol(out). Mediates glycerol diffusion across the cytoplasmic membrane via a pore-type mechanism. The polypeptide is Glycerol uptake facilitator protein (glpF) (Escherichia coli O157:H7).